Here is a 332-residue protein sequence, read N- to C-terminus: Small ribosomal subunit protein uS2 (332 aa).

The protein belongs to the universal ribosomal protein uS2 family.

This Afipia carboxidovorans (strain ATCC 49405 / DSM 1227 / KCTC 32145 / OM5) (Oligotropha carboxidovorans) protein is Small ribosomal subunit protein uS2.